Reading from the N-terminus, the 234-residue chain is Large ribosomal subunit protein uL1 (234 aa).

Belongs to the universal ribosomal protein uL1 family. Part of the 50S ribosomal subunit.

In terms of biological role, binds directly to 23S rRNA. The L1 stalk is quite mobile in the ribosome, and is involved in E site tRNA release. Functionally, protein L1 is also a translational repressor protein, it controls the translation of the L11 operon by binding to its mRNA. The chain is Large ribosomal subunit protein uL1 from Wolinella succinogenes (strain ATCC 29543 / DSM 1740 / CCUG 13145 / JCM 31913 / LMG 7466 / NCTC 11488 / FDC 602W) (Vibrio succinogenes).